Here is a 313-residue protein sequence, read N- to C-terminus: 2-phosphoglycerate kinase (313 aa).

The ATP-cone domain maps to 8–95; sequence SRILVTDKEY…LWRRVLKKHS (88 aa).

This sequence belongs to the 2-phosphoglycerate kinase family. A divalent metal cation serves as cofactor.

It carries out the reaction (2R)-2-phosphoglycerate + ATP = (2R)-2,3-bisphosphoglycerate + ADP + H(+). Its pathway is thermoadapter biosynthesis; cyclic 2,3-diphosphoglycerate biosynthesis; cyclic 2,3-diphosphoglycerate from 2-phospho-D-glycerate: step 1/2. Its function is as follows. Catalyzes the phosphorylation of 2-phosphoglycerate to 2,3-diphosphoglycerate. Involved in the biosynthesis of cyclic 2,3-bisphosphoglycerate, a thermoprotectant. This chain is 2-phosphoglycerate kinase, found in Methanococcus maripaludis (strain C6 / ATCC BAA-1332).